The sequence spans 345 residues: KH domain-containing, RNA-binding, signal transduction-associated protein 2 (345 aa).

A KH domain is found at 65–131 (LIPVKQYPKF…AKHAHLSDEL (67 aa)). Disordered stretches follow at residues 178–224 (LNGS…TRGA) and 321–345 (SRSTLKAPLQRPARAGYREHPYGRY). The segment covering 336–345 (GYREHPYGRY) has biased composition (basic and acidic residues).

This sequence belongs to the KHDRBS family.

The protein localises to the nucleus. RNA-binding protein that plays a role in the regulation of alternative splicing. The polypeptide is KH domain-containing, RNA-binding, signal transduction-associated protein 2 (khdrbs2) (Xenopus tropicalis (Western clawed frog)).